The sequence spans 448 residues: Ribosomal protein uS12 methylthiotransferase RimO (448 aa).

The 111-residue stretch at 6–116 (PKVGIVSLGC…VVEAVHAAIP (111 aa)) folds into the MTTase N-terminal domain. [4Fe-4S] cluster contacts are provided by Cys15, Cys51, Cys80, Cys147, Cys151, and Cys154. One can recognise a Radical SAM core domain in the interval 133-371 (LTPHHYAYLK…EAARQIADER (239 aa)). The 67-residue stretch at 373–439 (AAKEGTRIEV…DYDLWGDVVE (67 aa)) folds into the TRAM domain.

This sequence belongs to the methylthiotransferase family. RimO subfamily. It depends on [4Fe-4S] cluster as a cofactor.

The protein localises to the cytoplasm. The catalysed reaction is L-aspartate(89)-[ribosomal protein uS12]-hydrogen + (sulfur carrier)-SH + AH2 + 2 S-adenosyl-L-methionine = 3-methylsulfanyl-L-aspartate(89)-[ribosomal protein uS12]-hydrogen + (sulfur carrier)-H + 5'-deoxyadenosine + L-methionine + A + S-adenosyl-L-homocysteine + 2 H(+). Its function is as follows. Catalyzes the methylthiolation of an aspartic acid residue of ribosomal protein uS12. This chain is Ribosomal protein uS12 methylthiotransferase RimO, found in Paramagnetospirillum magneticum (strain ATCC 700264 / AMB-1) (Magnetospirillum magneticum).